Consider the following 553-residue polypeptide: Protein spartin (553 aa).

One can recognise an MIT domain in the interval 15–96 (IRTAYKAAMT…ETELRYRLKV (82 aa)). Residues 105-130 (DDSAVEATEESRAEMDTKRPPLLAEN) form a disordered region. Positions 113–123 (EESRAEMDTKR) are enriched in basic and acidic residues. Residues 325–509 (IVSAADFIAS…SQNVNYITPK (185 aa)) form the Senescence domain.

Interacts with Eps-15 (via C-terminal region); the interaction is required for spartin localization to the NMJ presynaptic membrane. As to expression, expressed in larval brain, ventral nerve cord and neuropil (at protein level).

It localises to the presynaptic cell membrane. The protein resides in the early endosome. Its subcellular location is the lipid droplet. In terms of biological role, during postembryonic development, functions with endocytic adapter Eps-15 in neurons to restrain synaptic growth, by inhibiting BMP signaling, and to control synaptic endocytosis. Required presynaptically for neuromuscular junction (NMJ) neurotransmission. Inhibits neuronal BMP signaling by promoting endocytic internalization and subsequent endosomal trafficking of the BMP receptor wit. In this way, regulates the Fmr1 translational regulator controlling Futsch expression to modulate neuronal microtubule stability, which controls both synaptogenesis and neuronal survival. The chain is Protein spartin from Drosophila melanogaster (Fruit fly).